The chain runs to 540 residues: FAD-binding monooxygenase lolF2 (540 aa).

FAD contacts are provided by residues 43–46 and 55–58; these read VWRE and DSLF. Residues 53–55, 182–188, and 205–206 each bind NADP(+); these read AVD, TGPSGVQ, and QS.

Belongs to the FAD-binding monooxygenase family. FAD is required as a cofactor.

The protein operates within alkaloid biosynthesis. Functionally, FAD-binding monooxygenase; part of the gene cluster that mediates the biosynthesis of loline alkaloids, potent insecticidal agents composed of a pyrrolizidine ring system and an uncommon ether bridge linking carbons 2 and 7. Lolines are structurally differentiated by the various modifications of the L-amino group and include norloline, loline, N-methylloline, N-acetylloline, N-acetylnorloline, and N-formylloline. The first committed step is the condensation of O-acetyl-L-homoserine (derived from L-aspartic acid) and L-proline, probably catalyzed by the gamma-type pyridoxal 5'-phosphate(PLP)-dependent enzyme lolC, to give the diamino diacid, NACPP. Ensuing cyclization, decarboxylation, and acetylation steps yield 1-exo-acetamidopyrrolizidine (AcAP). LolO is required for installation of the ether bridge upon the pathway intermediate, 1-exo-acetamidopyrrolizidine (AcAP). In sequential 2-oxoglutarate- and O(2)-consuming steps, lolO removes hydrogens from C2 and C7 of AcAP to form both carbon-oxygen bonds in N-acetylnorloline (NANL), the precursor to all other lolines. The enzymes lolD, lolE, lolF and lolT have also been proposed to be involved in the ether-bridge installation. Further processing of the exocyclic moiety of NANL by fungal N-acetamidase (LolN), methyltransferase (LolM), and cytochrome P450 (LolP) enzymes, with occasional involvement of a plant acetyltransferase, generates the other known lolines. LolN transforms NANL to norlonine which is monomethylated and dimethylated to respectively lonine and N-methyllonine (NML) by lolM. LolP catalyzes hydroxylation of the methyl group in N-methylloline (NML) and further oxygenation to N-formylloline (NFL). A plant acetyltransferase is responsible for the acetylation of loline to form N-acetylloline (NAL). LolA might interact with aspartate kinase to prevent feedback inhibition of its activity by these end products and thereby promote production of l-homoserine from l-aspartate. The chain is FAD-binding monooxygenase lolF2 from Epichloe uncinata (Endophyte fungus).